The following is a 219-amino-acid chain: uncharacterized protein (219 aa).

Positions 57–158 constitute an HD domain; it reads QLEHMTRAAM…LSEASRQTLL (102 aa).

This is an uncharacterized protein from Acanthamoeba polyphaga mimivirus (APMV).